The sequence spans 519 residues: Seed lectin (519 aa).

2 disulfide bridges follow: Cys249–Cys258 and Cys274–Cys293. 2 consecutive Ricin B-type lectin domains span residues 261 to 387 (ETRT…WRVG) and 390 to 518 (VQPI…WVLF). A 1-alpha repeat occupies 271–311 (DALCVDVAGALTSDGSRLILYPCGQQVNQKWTFHSDGTVRS). Residues 276-279 (DVAG) and 296-298 (QVN) contribute to the a carbohydrate site. A 1-beta repeat occupies 312–352 (LGKCLATNNSKFGNLVVIYDCSKLAAEDISWDVSVGGTIMN). Cysteines 315 and 332 form a disulfide. Residues 356–388 (EDLALTSNKATRSTNLTMEVNTYSASQGWRVGN) form a 1-gamma repeat. Asn370 carries N-linked (GlcNAc...) asparagine glycosylation. The stretch at 401–438 (DDMCLEATDGNTNMWLEECVPNQREQSWALYSDGTIRV) is one 2-alpha repeat. 2 cysteine pairs are disulfide-bonded: Cys404–Cys419 and Cys445–Cys464. A 2-beta repeat occupies 442–482 (RELCVTASSSTYDNWKVITILNCDGSNNQRWVFLADGSIST). A carbohydrate is bound by residues Asp454, 491–494 (DVAR), 505–508 (HRPH), and Asn512. The stretch at 486–513 (QRLAMDVARSDVDLKKIILHRPHGDLNQ) is one 2-gamma repeat.

This sequence in the N-terminal section; belongs to the ribosome-inactivating protein family. Type 2 RIP subfamily. Heterotrimer consisting of Aalpha, Abeta and B chains with Abeta and B being disulfide-linked.

Functionally, seed lectin similar to type 2 ribosome-inactivating proteins. The Aalpha and Abeta chains constitute the rRNA glycosidase domain and the B chain the carbohydrate-binding lectin domain. Is predicted to have no glycosidase activity and, hence, to be non-toxic, due to small changes in both the nucleotide binding and carbohydrate binding capabilities. Binds galactose and derivatives with a preference for the beta-anomeric forms. Binds prophyrins. Has hemagglutinating activity towards rabbit and human erythrocytes. This chain is Seed lectin, found in Trichosanthes anguina (Snake gourd).